A 124-amino-acid polypeptide reads, in one-letter code: Kinocilin (124 aa).

Transmembrane regions (helical) follow at residues 13 to 33 (LQLACVALGLVAGSIIIGVSV) and 40 to 60 (VGGIFLGAAGLGLLIFAYPFL). The interval 80–124 (PNSGPDHGEGRSSNNSNKEGARSGLSTVTRTLEKLKPGGRGTEEG) is disordered. Residues 90–109 (RSSNNSNKEGARSGLSTVTR) are compositionally biased toward polar residues. Over residues 110–124 (TLEKLKPGGRGTEEG) the composition is skewed to basic and acidic residues.

In terms of tissue distribution, preferentially expressed in the inner ear and testis. Localizes mainly in the kinocilium of sensory cells in the inner ear. Also present in the manchette of the spermatids, a transient structure enriched in interconnected microtubules (at protein level).

The protein resides in the membrane. Functionally, may play a role in stabilizing dense microtubular networks or in vesicular trafficking. The chain is Kinocilin (Kncn) from Mus musculus (Mouse).